Here is a 608-residue protein sequence, read N- to C-terminus: MQWLSVCSLLVLLSVLSRSQAQNQICTIFTEAKEDGFKSLILVGLAQNLPDSTLGDLVPLIAEALAMGVKCCSDTPPEDCERDVADLFQSAVCSSETLVEKNDLKMCCEKTAAERTHCFVDHKAKIPRDLSLKAELPAADQCEDFKKDHKAFVGRFIFKFSKSNPMLPPHVVLAIAKGYGEVLTTCCGEAEAQTCFDTKKATFQHAIAKRVAELKSLCIVHKKYGDRVVKAKKLVQYSQKMPQASFQEMAGMVDKIVATVAPCCSGDMVTCMKERKTLVDEVCADESVLSRAAGLSACCKEDAVHRGSCVEAMKPDPKPDGLSEHYDVHADIAAVCQTFTKTPDVAMGKLVYEISVRHPESSQQVILRFAKEAEQALLQCCDMEDHAECVKTALAGSDIDKKITDETDYYKKMCAAEAAVSDDNFEKSMMVYYTRIMPQASFDQLHMVSETVHDVLHACCKDEPGHFVLPCAEEKLTDAIDATCDDYDPSSINPHIAHCCNQSYSMRRHCILAIQPDTEFTPPELDASSFHMGPELCTKDSKDLLLSGKKLLYGVVRHKTTITEDHLKTISTKYHTMKDKCCAAEDQAACFTEEAPKLVSESAELVKV.

Residues 1–14 form the signal peptide; that stretch reads MQWLSVCSLLVLLS. Residues 15-18 constitute a propeptide that is removed on maturation; sequence VLSR. Albumin domains are found at residues 19–205, 206–398, and 402–600; these read SQAQ…TFQH, AIAK…AGSD, and KITD…KLVS. 18 cysteine pairs are disulfide-bonded: Cys26/Cys72, Cys71/Cys80, Cys93/Cys108, Cys107/Cys118, Cys142/Cys187, Cys186/Cys195, Cys218/Cys264, Cys263/Cys271, Cys283/Cys299, Cys298/Cys309, Cys336/Cys381, Cys380/Cys389, Cys414/Cys460, Cys459/Cys471, Cys484/Cys500, Cys499/Cys510, Cys537/Cys582, and Cys581/Cys590. N-linked (GlcNAc...) asparagine glycosylation occurs at Asn501.

Belongs to the ALB/AFP/VDB family. In terms of tissue distribution, plasma.

The protein resides in the secreted. Its function is as follows. Binds water, Ca(2+), Na(+), K(+), fatty acids, hormones, bilirubin and drugs. Its main function is the regulation of the colloidal osmotic pressure of blood. The sequence is that of Albumin 2 (alb2) from Salmo salar (Atlantic salmon).